The chain runs to 204 residues: MSIFEYNGSAVVAMVGKNCFAIASDRRLGVQLQTVATDFQRVFKIHDKLYIGLSGLATDAQTLYQRLVFRHKLYQLREERDMKPQTFASLVSALLYEKRFGPYFCQPVIAGLGEDNEPFICTMDCIGAKELAKDFVVSGTASESLYGACESMYKPNMEPEELFETISQALQSSVDRDCLSGWGGFVLLVTPTEVKECVIKGRMD.

This sequence belongs to the peptidase T1B family. The 26S proteasome consists of a 20S proteasome core and two 19S regulatory subunits. The 20S proteasome core is composed of 28 subunits that are arranged in four stacked rings, resulting in a barrel-shaped structure. The two end rings are each formed by seven alpha subunits, and the two central rings are each formed by seven beta subunits. The catalytic chamber with the active sites is on the inside of the barrel.

It localises to the cytoplasm. The protein localises to the nucleus. Its function is as follows. Non-catalytic component of the proteasome, a multicatalytic proteinase complex which is characterized by its ability to cleave peptides with Arg, Phe, Tyr, Leu, and Glu adjacent to the leaving group at neutral or slightly basic pH. The proteasome has an ATP-dependent proteolytic activity. In Oryza sativa subsp. japonica (Rice), this protein is Proteasome subunit beta type-3 (PBC1).